A 409-amino-acid polypeptide reads, in one-letter code: LL-diaminopimelate aminotransferase (409 aa).

Positions 15 and 42 each coordinate substrate. Residues Y72, 108 to 109 (SK), Y132, N187, Y218, and 246 to 248 (SFS) each bind pyridoxal 5'-phosphate. Substrate-binding residues include K109, Y132, and N187. K249 carries the N6-(pyridoxal phosphate)lysine modification. 2 residues coordinate pyridoxal 5'-phosphate: R257 and N292. Positions 292 and 388 each coordinate substrate.

The protein belongs to the class-I pyridoxal-phosphate-dependent aminotransferase family. LL-diaminopimelate aminotransferase subfamily. In terms of assembly, homodimer. The cofactor is pyridoxal 5'-phosphate.

It catalyses the reaction (2S,6S)-2,6-diaminopimelate + 2-oxoglutarate = (S)-2,3,4,5-tetrahydrodipicolinate + L-glutamate + H2O + H(+). The protein operates within amino-acid biosynthesis; L-lysine biosynthesis via DAP pathway; LL-2,6-diaminopimelate from (S)-tetrahydrodipicolinate (aminotransferase route): step 1/1. Functionally, involved in the synthesis of meso-diaminopimelate (m-DAP or DL-DAP), required for both lysine and peptidoglycan biosynthesis. Catalyzes the direct conversion of tetrahydrodipicolinate to LL-diaminopimelate. The protein is LL-diaminopimelate aminotransferase of Heliobacterium modesticaldum (strain ATCC 51547 / Ice1).